Consider the following 259-residue polypeptide: Hydroxyethylthiazole kinase (259 aa).

Methionine 50 lines the substrate pocket. ATP contacts are provided by arginine 122 and threonine 168. Glycine 195 serves as a coordination point for substrate.

This sequence belongs to the Thz kinase family. Requires Mg(2+) as cofactor.

The catalysed reaction is 5-(2-hydroxyethyl)-4-methylthiazole + ATP = 4-methyl-5-(2-phosphooxyethyl)-thiazole + ADP + H(+). It participates in cofactor biosynthesis; thiamine diphosphate biosynthesis; 4-methyl-5-(2-phosphoethyl)-thiazole from 5-(2-hydroxyethyl)-4-methylthiazole: step 1/1. Catalyzes the phosphorylation of the hydroxyl group of 4-methyl-5-beta-hydroxyethylthiazole (THZ). The sequence is that of Hydroxyethylthiazole kinase from Escherichia coli O127:H6 (strain E2348/69 / EPEC).